The following is a 155-amino-acid chain: MNYLQYYPTDVINGEGTRCTLFVSGCTHACKGCYNQKSWSFSAGVLFDDVMEQQIINDLKDTRIKRQGLTLSGGDPLHPLNVETLLPFVQRVKRECPDKDIWVWTGYKLDELDKQQRAMLPYIDVLIDGKFIQEQADPSLVWRGSANQIIHRFKL.

The [4Fe-4S] cluster site is built by Cys-26, Cys-30, and Cys-33. Residues 32–34 (GCY) and Gly-74 contribute to the S-adenosyl-L-methionine site.

The protein belongs to the organic radical-activating enzymes family. Forms a tetramer composed of two NrdD and two NrdG subunits. Requires [4Fe-4S] cluster as cofactor.

It is found in the cytoplasm. It carries out the reaction glycyl-[protein] + reduced [flavodoxin] + S-adenosyl-L-methionine = glycin-2-yl radical-[protein] + semiquinone [flavodoxin] + 5'-deoxyadenosine + L-methionine + H(+). In terms of biological role, activation of anaerobic ribonucleoside-triphosphate reductase under anaerobic conditions by generation of an organic free radical, using S-adenosylmethionine and reduced flavodoxin as cosubstrates to produce 5'-deoxy-adenosine. The polypeptide is Anaerobic ribonucleoside-triphosphate reductase-activating protein (nrdG) (Haemophilus influenzae (strain ATCC 51907 / DSM 11121 / KW20 / Rd)).